Here is an 832-residue protein sequence, read N- to C-terminus: Polyphosphoinositide phosphatase (832 aa).

One can recognise an SAC domain in the interval 145–491 (IEKVDLARTF…GDAIALQYGG (347 aa)).

Component of the PI(3,5)P2 regulatory complex. Mg(2+) serves as cofactor.

The protein localises to the cytoplasm. It is found in the vacuole membrane. It catalyses the reaction a 1,2-diacyl-sn-glycero-3-phospho-(1D-myo-inositol-3,5-bisphosphate) + H2O = a 1,2-diacyl-sn-glycero-3-phospho-(1D-myo-inositol-3-phosphate) + phosphate. In terms of biological role, the PI(3,5)P2 regulatory complex regulates both the synthesis and turnover of phosphatidylinositol 3,5-bisphosphate (PtdIns(3,5)P2). The polypeptide is Polyphosphoinositide phosphatase (Schizosaccharomyces pombe (strain 972 / ATCC 24843) (Fission yeast)).